The sequence spans 915 residues: Scaffold attachment factor B1 (915 aa).

A compositionally biased stretch (low complexity) spans methionine 1–serine 24. The interval methionine 1–aspartate 33 is disordered. Alanine 2 carries the post-translational modification N-acetylalanine. A phosphoserine mark is found at serine 24 and serine 55. One can recognise an SAP domain in the interval leucine 31–isoleucine 65. A disordered region spans residues alanine 64–threonine 118. Residues aspartate 67–isoleucine 77 show a composition bias toward acidic residues. Residue serine 79 is modified to Phosphoserine. Residues glutamate 98–threonine 118 are compositionally biased toward acidic residues. Glycyl lysine isopeptide (Lys-Gly) (interchain with G-Cter in SUMO2) cross-links involve residues lysine 172 and lysine 186. Phosphothreonine is present on threonine 188. Phosphoserine is present on residues serine 195, serine 197, and serine 209. The disordered stretch occupies residues leucine 221–asparagine 407. A compositionally biased stretch (basic and acidic residues) spans cysteine 225–serine 234. Residue lysine 231 forms a Glycyl lysine isopeptide (Lys-Gly) (interchain with G-Cter in SUMO) linkage. Polar residues predominate over residues serine 275–alanine 286. The span at valine 293–cysteine 309 shows a compositional bias: basic and acidic residues. A Glycyl lysine isopeptide (Lys-Gly) (interchain with G-Cter in SUMO) cross-link involves residue lysine 294. The segment covering glutamate 319–alanine 330 has biased composition (low complexity). Basic and acidic residues predominate over residues glutamate 346–phenylalanine 359. Over residues glutamate 371 to serine 383 the composition is skewed to polar residues. Lysine 381 is covalently cross-linked (Glycyl lysine isopeptide (Lys-Gly) (interchain with G-Cter in SUMO2)). A phosphoserine mark is found at serine 383 and serine 384. Over residues aspartate 390–arginine 401 the composition is skewed to basic and acidic residues. Lysine 392 participates in a covalent cross-link: Glycyl lysine isopeptide (Lys-Gly) (interchain with G-Cter in SUMO2). Residues arginine 406–asparagine 484 form the RRM domain. The residue at position 415 (serine 415) is a Phosphoserine. 2 stretches are compositionally biased toward basic and acidic residues: residues isoleucine 477–arginine 551 and glycine 559–lysine 570. Disordered regions lie at residues isoleucine 477–glutamate 641, arginine 671–proline 708, and phenylalanine 749–tyrosine 915. Glycyl lysine isopeptide (Lys-Gly) (interchain with G-Cter in SUMO2) cross-links involve residues lysine 483, lysine 514, lysine 543, and lysine 570. The interaction with POLR2A. Interaction with SFRS1; SFRS9 and SFRS10 stretch occupies residues glycine 528–arginine 792. Lysine 578 participates in a covalent cross-link: Glycyl lysine isopeptide (Lys-Gly) (interchain with G-Cter in SUMO1); alternate. A Glycyl lysine isopeptide (Lys-Gly) (interchain with G-Cter in SUMO2); alternate cross-link involves residue lysine 578. Serine 580, serine 582, serine 601, and serine 604 each carry phosphoserine. Residues glycine 581–glutamate 641 are compositionally biased toward basic and acidic residues. Positions lysine 599 to aspartate 616 match the Nuclear localization signal motif. Residues lysine 599–tyrosine 915 are interaction with SAFB2. An N6-acetyllysine modification is found at lysine 607. A compositionally biased stretch (basic and acidic residues) spans phenylalanine 749–aspartate 796. Position 811 is an omega-N-methylarginine (arginine 811). 2 stretches are compositionally biased toward basic and acidic residues: residues proline 817–serine 832 and methionine 841–glycine 851. Lysine 847 is covalently cross-linked (Glycyl lysine isopeptide (Lys-Gly) (interchain with G-Cter in SUMO2)). 3 positions are modified to asymmetric dimethylarginine: arginine 868, arginine 874, and arginine 884. The span at glycine 892–serine 901 shows a compositional bias: gly residues. Over residues arginine 905 to tyrosine 915 the composition is skewed to basic and acidic residues.

As to quaternary structure, monomer and homodimer. Forms heterodimers with SAFB2. Interacts with KHDRBS3. Interacts with CLK2. Interacts with POLR2A, SRSF1/ASF, SRSF9/SRp30c and SFSF10/TRA2B. Interacts with isoform 1 and isoform 2 of SRPK1 and inhibits its activity. Interacts with RBMX. Interacts with FUS. Interacts with ZBED4. In terms of processing, sumoylated by PIAS1 with SUMO1 and SUMO2/3, desumoylated by SENP1. Sumoylation is required for transcriptional repressor activity. In terms of tissue distribution, ubiquitous. Expressed at high levels in the CNS and at low levels in the liver. Expressed in a wide number of breast cancer cell lines.

Its subcellular location is the nucleus. Functionally, binds to scaffold/matrix attachment region (S/MAR) DNA and forms a molecular assembly point to allow the formation of a 'transcriptosomal' complex (consisting of SR proteins and RNA polymerase II) coupling transcription and RNA processing. Functions as an estrogen receptor corepressor and can also bind to the HSP27 promoter and decrease its transcription. Thereby acts as a negative regulator of cell proliferation. When associated with RBMX, binds to and stimulates transcription from the SREBF1 promoter. The polypeptide is Scaffold attachment factor B1 (SAFB) (Homo sapiens (Human)).